We begin with the raw amino-acid sequence, 166 residues long: Transcriptional repressor NrdR (166 aa).

A zinc finger spans residues 3 to 34; that stretch reads CIKCGNMEDKVIDSRPIKEGKSIRRRRECLRC. Residues 49–139 form the ATP-cone domain; it reads LFVKKRNGSI…VYCKFHDAKD (91 aa).

Belongs to the NrdR family. Requires Zn(2+) as cofactor.

In terms of biological role, negatively regulates transcription of bacterial ribonucleotide reductase nrd genes and operons by binding to NrdR-boxes. This is Transcriptional repressor NrdR from Methylacidiphilum infernorum (isolate V4) (Methylokorus infernorum (strain V4)).